The sequence spans 682 residues: DNA-directed RNA polymerase subunit beta' (682 aa).

The Zn(2+) site is built by Cys-69, Cys-71, Cys-87, and Cys-90. Positions 489, 491, and 493 each coordinate Mg(2+).

This sequence belongs to the RNA polymerase beta' chain family. RpoC1 subfamily. In plastids the minimal PEP RNA polymerase catalytic core is composed of four subunits: alpha, beta, beta', and beta''. When a (nuclear-encoded) sigma factor is associated with the core the holoenzyme is formed, which can initiate transcription. Mg(2+) is required as a cofactor. It depends on Zn(2+) as a cofactor.

Its subcellular location is the plastid. The protein resides in the chloroplast. It carries out the reaction RNA(n) + a ribonucleoside 5'-triphosphate = RNA(n+1) + diphosphate. Functionally, DNA-dependent RNA polymerase catalyzes the transcription of DNA into RNA using the four ribonucleoside triphosphates as substrates. This is DNA-directed RNA polymerase subunit beta' from Vitis vinifera (Grape).